We begin with the raw amino-acid sequence, 1255 residues long: Period circadian protein homolog 2 (1255 aa).

The interval 1-79 is disordered; that stretch reads MNGYAEFPPS…EPPDARQSPD (79 aa). Residues 35 to 56 show a composition bias toward polar residues; it reads SSGSSGHETNENCSTGRDSQGS. The short motif at 111–120 is the Nuclear export signal 1 element; the sequence is LIKTLKELKV. Residues 181-248 form the PAS 1 domain; that stretch reads VTSEHIVKNA…FHSFTSPYKL (68 aa). The LXXLL motif lies at 308-312; the sequence is LCCLL. Residues 321-387 enclose the PAS 2 domain; that stretch reads YEAPRIPPEK…MLAIHKKILQ (67 aa). In terms of domain architecture, PAC spans 395–438; that stretch reads YSPIRFRARNGEYITLDTSWSSFINPWSRKISFIIGRHKVRVGP. A Nuclear export signal 2 motif is present at residues 462-471; it reads LTEQIHRLLL. 2 disordered regions span residues 473 to 557 and 617 to 646; these read PVPH…AVPA and RSSD…SRTG. The interval 480-484 is important for protein stability; that stretch reads SGYGS. A compositionally biased stretch (basic and acidic residues) spans 504 to 516; it reads NGHEDSRRRRAEI. Positions 512–717 are CSNK1E binding domain; that stretch reads RRAEICKNGN…ALACGLSQEK (206 aa). 4 positions are modified to phosphoserine: serine 527, serine 530, serine 533, and serine 540. The segment covering 529–541 has biased composition (basic and acidic residues); that stretch reads YSHESGEQKKKSV. Serine 662, serine 696, serine 700, serine 714, serine 766, and serine 771 each carry phosphoserine. Disordered stretches follow at residues 764-838 and 931-985; these read ERSK…DTSQ and FPSH…QSRS. Positions 789 to 805 match the Nuclear localization signal motif; it reads KKTGKNRKLKSKRVKPR. Over residues 790–803 the composition is skewed to basic residues; it reads KTGKNRKLKSKRVK. Polar residues-rich tracts occupy residues 829-838 and 936-956; these read TAWSPSDTSQ and TLTS…TSIP. Residues 888 to 1071 are interaction with PPARG; it reads QFAVQPPPFP…NEDLCSASGS (184 aa). A Phosphoserine modification is found at serine 945. A compositionally biased stretch (low complexity) spans 959–972; it reads PCACPATRATPPSA. Residue serine 977 is modified to Phosphoserine. The Nuclear export signal 3 motif lies at 989–996; it reads LQLNLLQL. Positions 1018 to 1050 are disordered; sequence VGADCKPGTSRDQQPKAPLTRDEPSDTQNSDAL. The LXXLL signature appears at 1057 to 1061; the sequence is LNLLL. The interval 1077 to 1106 is disordered; that stretch reads LGSGSLGCDASPSGAGSSDTSHTSKYFGSI. Polar residues predominate over residues 1090–1106; the sequence is GAGSSDTSHTSKYFGSI. Phosphoserine is present on serine 1124. The CRY binding domain stretch occupies residues 1155–1255; that stretch reads SRNLEAVLKE…PLNHRIEEQT (101 aa). The disordered stretch occupies residues 1231–1255; the sequence is GLSEVSDTKEDENGSPLNHRIEEQT.

As to quaternary structure, homodimer. Component of the circadian core oscillator, which includes the CRY proteins, CLOCK or NPAS2, BMAL1 or BMAL2, CSNK1D and/or CSNK1E, TIMELESS, and the PER proteins. Interacts with CLOCK-BMAL1 (off DNA). Interacts with BMAL2. Interacts directly with PER1 and PER3, and through a C-terminal domain, with CRY1 and CRY2. Interacts (via PAS 2 domain) with TIMELESS. Interacts with NFIL3. Different large complexes have been identified with different repressive functions. The core of PER complexes is composed of at least PER1, PER2, PER3, CRY1, CRY2, CSNK1D and/or CSNK1E. The large PER complex involved in the repression of transcriptional termination is composed of at least PER2, CDK9, DDX5, DHX9, NCBP1 and POLR2A (active). The large PER complex involved in the histone deacetylation is composed of at least HDAC1, PER2, SFPQ and SIN3A. The large PER complex involved in the histone methylation is composed of at least PER2, CBX3, TRIM28, SUV39H1 and/or SUV39H2; CBX3 mediates the formation of the complex. Interacts with SETX; the interaction inhibits termination of circadian target genes. Interacts with the nuclear receptors HNF4A, NR1D1, NR4A2, RORA, PPARA, PPARG and THRA; the interaction with at least PPARG is ligand dependent. Interacts with PML. Interacts (phosphorylated) with BTRC and FBXW11; the interactions trigger proteasomal degradation. Interacts with NONO and SFPQ. Interacts with CAVIN3. Interacts with MAGEL2. Interacts with MAP1LC3B. Interacts with HNF4A. Acetylated. Deacetylated by SIRT1, resulting in decreased protein stability. Deacetylated by SIRT6, preventing its degradation by the proteasome, resulting in increased protein stability. Post-translationally, phosphorylated by CSNK1E and CSNK1D. Phosphorylation results in PER2 protein degradation. May be dephosphorylated by PP1. In terms of processing, ubiquitinated, leading to its proteasomal degradation. Ubiquitination may be inhibited by CRY1. Widely expressed. Found in heart, brain, placenta, lung, liver, skeleatal muscle, kidney and pancreas. High levels in skeletal muscle and pancreas. Low levels in lung. Isoform 2 is expressed in keratinocytes (at protein level).

It is found in the nucleus. It localises to the cytoplasm. The protein localises to the perinuclear region. Its subcellular location is the nucleolus. Its function is as follows. Transcriptional repressor which forms a core component of the circadian clock. The circadian clock, an internal time-keeping system, regulates various physiological processes through the generation of approximately 24 hour circadian rhythms in gene expression, which are translated into rhythms in metabolism and behavior. It is derived from the Latin roots 'circa' (about) and 'diem' (day) and acts as an important regulator of a wide array of physiological functions including metabolism, sleep, body temperature, blood pressure, endocrine, immune, cardiovascular, and renal function. Consists of two major components: the central clock, residing in the suprachiasmatic nucleus (SCN) of the brain, and the peripheral clocks that are present in nearly every tissue and organ system. Both the central and peripheral clocks can be reset by environmental cues, also known as Zeitgebers (German for 'timegivers'). The predominant Zeitgeber for the central clock is light, which is sensed by retina and signals directly to the SCN. The central clock entrains the peripheral clocks through neuronal and hormonal signals, body temperature and feeding-related cues, aligning all clocks with the external light/dark cycle. Circadian rhythms allow an organism to achieve temporal homeostasis with its environment at the molecular level by regulating gene expression to create a peak of protein expression once every 24 hours to control when a particular physiological process is most active with respect to the solar day. Transcription and translation of core clock components (CLOCK, NPAS2, BMAL1, BMAL2, PER1, PER2, PER3, CRY1 and CRY2) plays a critical role in rhythm generation, whereas delays imposed by post-translational modifications (PTMs) are important for determining the period (tau) of the rhythms (tau refers to the period of a rhythm and is the length, in time, of one complete cycle). A diurnal rhythm is synchronized with the day/night cycle, while the ultradian and infradian rhythms have a period shorter and longer than 24 hours, respectively. Disruptions in the circadian rhythms contribute to the pathology of cardiovascular diseases, cancer, metabolic syndrome and aging. A transcription/translation feedback loop (TTFL) forms the core of the molecular circadian clock mechanism. Transcription factors, CLOCK or NPAS2 and BMAL1 or BMAL2, form the positive limb of the feedback loop, act in the form of a heterodimer and activate the transcription of core clock genes and clock-controlled genes (involved in key metabolic processes), harboring E-box elements (5'-CACGTG-3') within their promoters. The core clock genes: PER1/2/3 and CRY1/2 which are transcriptional repressors form the negative limb of the feedback loop and interact with the CLOCK|NPAS2-BMAL1|BMAL2 heterodimer inhibiting its activity and thereby negatively regulating their own expression. This heterodimer also activates nuclear receptors NR1D1/2 and RORA/B/G, which form a second feedback loop and which activate and repress BMAL1 transcription, respectively. PER1 and PER2 proteins transport CRY1 and CRY2 into the nucleus with appropriate circadian timing, but also contribute directly to repression of clock-controlled target genes through interaction with several classes of RNA-binding proteins, helicases and others transcriptional repressors. PER appears to regulate circadian control of transcription by at least three different modes. First, interacts directly with the CLOCK-BMAL1 at the tail end of the nascent transcript peak to recruit complexes containing the SIN3-HDAC that remodel chromatin to repress transcription. Second, brings H3K9 methyltransferases such as SUV39H1 and SUV39H2 to the E-box elements of the circadian target genes, like PER2 itself or PER1. The recruitment of each repressive modifier to the DNA seems to be very precisely temporally orchestrated by the large PER complex, the deacetylases acting before than the methyltransferases. Additionally, large PER complexes are also recruited to the target genes 3' termination site through interactions with RNA-binding proteins and helicases that may play a role in transcription termination to regulate transcription independently of CLOCK-BMAL1 interactions. Recruitment of large PER complexes to the elongating polymerase at PER and CRY termination sites inhibited SETX action, impeding RNA polymerase II release and thereby repressing transcriptional reinitiation. May propagate clock information to metabolic pathways via the interaction with nuclear receptors. Coactivator of PPARA and corepressor of NR1D1, binds rhythmically at the promoter of nuclear receptors target genes like BMAL1 or G6PC1. Directly and specifically represses PPARG proadipogenic activity by blocking PPARG recruitment to target promoters and thereby inhibiting transcriptional activation. Required for fatty acid and lipid metabolism, is involved as well in the regulation of circulating insulin levels. Plays an important role in the maintenance of cardiovascular functions through the regulation of NO and vasodilatatory prostaglandins production in aortas. Controls circadian glutamate uptake in synaptic vesicles through the regulation of VGLUT1 expression. May also be involved in the regulation of inflammatory processes. Represses the CLOCK-BMAL1 induced transcription of BHLHE40/DEC1 and ATF4. Negatively regulates the formation of the TIMELESS-CRY1 complex by competing with TIMELESS for binding to CRY1. The polypeptide is Period circadian protein homolog 2 (PER2) (Homo sapiens (Human)).